The chain runs to 133 residues: Thioredoxin-like protein CXXS1 (133 aa).

The Thioredoxin domain occupies 1 to 120 (MEIQQQKGVG…VKKMVDASAE (120 aa)).

The protein belongs to the thioredoxin family.

This chain is Thioredoxin-like protein CXXS1, found in Oryza sativa subsp. japonica (Rice).